The sequence spans 368 residues: Histidinol-phosphate aminotransferase (368 aa).

The residue at position 229 (K229) is an N6-(pyridoxal phosphate)lysine.

It belongs to the class-II pyridoxal-phosphate-dependent aminotransferase family. Histidinol-phosphate aminotransferase subfamily. In terms of assembly, homodimer. Requires pyridoxal 5'-phosphate as cofactor.

It catalyses the reaction L-histidinol phosphate + 2-oxoglutarate = 3-(imidazol-4-yl)-2-oxopropyl phosphate + L-glutamate. It functions in the pathway amino-acid biosynthesis; L-histidine biosynthesis; L-histidine from 5-phospho-alpha-D-ribose 1-diphosphate: step 7/9. This Acidovorax ebreus (strain TPSY) (Diaphorobacter sp. (strain TPSY)) protein is Histidinol-phosphate aminotransferase.